A 410-amino-acid chain; its full sequence is Translation initiation factor 2 subunit gamma (410 aa).

Positions 6–203 (QSEVNIGMVG…AIQDFIPTPE (198 aa)) constitute a tr-type G domain. The interval 15–22 (GHVDHGKT) is G1. Mg(2+)-binding residues include D18, T22, G43, and S45. 18 to 23 (DHGKTS) contributes to the GTP binding site. A G2 region spans residues 43 to 47 (GISIR). Zn(2+) contacts are provided by C58, C61, C73, and C76. Residues 90–93 (DAPG) are G3. Residues 146–149 (NKID) and 181–183 (SAH) contribute to the GTP site. The interval 146–149 (NKID) is G4. The G5 stretch occupies residues 181-183 (SAH).

Belongs to the TRAFAC class translation factor GTPase superfamily. Classic translation factor GTPase family. EIF2G subfamily. In terms of assembly, heterotrimer composed of an alpha, a beta and a gamma chain. Mg(2+) serves as cofactor.

It catalyses the reaction GTP + H2O = GDP + phosphate + H(+). In terms of biological role, eIF-2 functions in the early steps of protein synthesis by forming a ternary complex with GTP and initiator tRNA. The protein is Translation initiation factor 2 subunit gamma of Methanococcus maripaludis (strain DSM 14266 / JCM 13030 / NBRC 101832 / S2 / LL).